Here is a 743-residue protein sequence, read N- to C-terminus: NAD(P)H-quinone oxidoreductase subunit 5, chloroplastic (743 aa).

Helical transmembrane passes span 9–29, 40–60, 89–109, 125–145, 147–167, 184–204, 219–239, 258–278, 280–300, 396–416, 425–445, 548–568, 607–627, and 723–743; these read WIIPFVPLPVPMLIGVGLLLF, WAFHSVLLLSIVMIFSIDLSI, IDPLTSIMLILITTVGIMVLI, FAYMSFFSTSMLGLVTSSNLI, IYIFWELVGMCSYLLIGFWFT, IGDLGLLLGILGFYWITGSFE, NEVNLVFLTICAVLLFAGAVA, TPISALIHAATMVAAGIFLVA, LLPLFIVIPYILNLISFIGII, TAFFLGTLSLCGIPPLACFWS, WLYSPIFAIIACSTAGLTAFY, LLPLLVLVLFTLFVGAIGIPF, IFSVSIAYFGIVIASFLYKPV, and YLFLYLSYVSIFLLIYYFLNL.

The protein belongs to the complex I subunit 5 family. As to quaternary structure, NDH is composed of at least 16 different subunits, 5 of which are encoded in the nucleus.

Its subcellular location is the plastid. The protein resides in the chloroplast thylakoid membrane. It catalyses the reaction a plastoquinone + NADH + (n+1) H(+)(in) = a plastoquinol + NAD(+) + n H(+)(out). The enzyme catalyses a plastoquinone + NADPH + (n+1) H(+)(in) = a plastoquinol + NADP(+) + n H(+)(out). NDH shuttles electrons from NAD(P)H:plastoquinone, via FMN and iron-sulfur (Fe-S) centers, to quinones in the photosynthetic chain and possibly in a chloroplast respiratory chain. The immediate electron acceptor for the enzyme in this species is believed to be plastoquinone. Couples the redox reaction to proton translocation, and thus conserves the redox energy in a proton gradient. The chain is NAD(P)H-quinone oxidoreductase subunit 5, chloroplastic (ndhF) from Carpenteria californica (Tree anemone).